Consider the following 459-residue polypeptide: D(1)-like dopamine receptor (459 aa).

The Extracellular portion of the chain corresponds to 1–23 (MAQNFSTVGDGKQMLLERDSSKR). An N-linked (GlcNAc...) asparagine glycan is attached at N4. A helical membrane pass occupies residues 24-49 (VLTGCFLSLLIFTTLLGNTLVCVAVT). Topologically, residues 50-60 (KFRHLRSKVTN) are cytoplasmic. Residues 61–87 (FFVISLAISDLLVAILVMPWKAATEIM) traverse the membrane as a helical segment. At 88–96 (GFWPFGEFC) the chain is on the extracellular side. Cysteines 96 and 187 form a disulfide. Residues 97 to 119 (NIWVAFDIMCSTASILNLCVISV) form a helical membrane-spanning segment. The Cytoplasmic segment spans residues 120–138 (DRYWAISSPFRYERKMTPK). Residues 139-164 (VACLMISVAWTLSVLISFIPVQLNWH) form a helical membrane-spanning segment. The Extracellular portion of the chain corresponds to 165–191 (KAQTASYVELNGTYAGDLPPDNCDSSL). Residues 192 to 216 (NRTYAISSSLISFYIPVAIMIVTYT) form a helical membrane-spanning segment. The Cytoplasmic segment spans residues 217-269 (RIYRIAQKQIRRISALERAAESAQNRHSSMGNSLSMESECSFKMSFKRETKVL). A helical transmembrane segment spans residues 270 to 297 (KTLSVIMGVFVCCWLPFFILNCMVPFCE). The Extracellular portion of the chain corresponds to 298–311 (ADDTTDFPCISSTT). The chain crosses the membrane as a helical span at residues 312–333 (FDVFVWFGWANSSLNPIIYAFN). Residues 334–459 (ADFRKAFSIL…QNGQHKSMSC (126 aa)) are Cytoplasmic-facing.

The protein belongs to the G-protein coupled receptor 1 family.

Its subcellular location is the cell membrane. The protein localises to the cell projection. It is found in the cilium membrane. In terms of biological role, receptor for dopamine. The protein is D(1)-like dopamine receptor (d14) of Takifugu rubripes (Japanese pufferfish).